A 287-amino-acid polypeptide reads, in one-letter code: MHPLLVKSFAKINLGLLITAKRQDGYHTLETIFAPINWYDTIEFSDSEKISMSCSNSDLPVDDNNLCIKAARSLQQFAAVRKGIAMKLQKQVPFGAGLGGGSSDAATVLRVLNELWKVNASPAELHALAVKLGADVPYFLSMKGLAYATGIGDELDDLALTLPYYIVTVFPEEHIATVWAYKNFYSRFDRELPDLKKLLSELCLSGKKEGLPAFENDFEPAVFDHFPAVRKVKLTLLEAGSIFSSLSGSGSAVFGLFEREDEALAAMKLLPEAYRKNLTPPGFCMAQ.

The active site involves lysine 11. 93-103 (PFGAGLGGGSS) contacts ATP. The active site involves aspartate 135.

It belongs to the GHMP kinase family. IspE subfamily.

The catalysed reaction is 4-CDP-2-C-methyl-D-erythritol + ATP = 4-CDP-2-C-methyl-D-erythritol 2-phosphate + ADP + H(+). It participates in isoprenoid biosynthesis; isopentenyl diphosphate biosynthesis via DXP pathway; isopentenyl diphosphate from 1-deoxy-D-xylulose 5-phosphate: step 3/6. In terms of biological role, catalyzes the phosphorylation of the position 2 hydroxy group of 4-diphosphocytidyl-2C-methyl-D-erythritol. The sequence is that of 4-diphosphocytidyl-2-C-methyl-D-erythritol kinase from Pelodictyon phaeoclathratiforme (strain DSM 5477 / BU-1).